The following is a 157-amino-acid chain: Arginine regulator (157 aa).

This sequence belongs to the ArgR family.

The protein localises to the cytoplasm. It functions in the pathway amino-acid degradation; L-arginine degradation via ADI pathway. Functionally, regulates the transcription of the arc operon, involved in arginine catabolism. This is Arginine regulator (argR1) from Streptococcus pyogenes serotype M3 (strain SSI-1).